The primary structure comprises 230 residues: 3-dehydroquinate dehydratase (230 aa).

Residues S26, 51–53, and R84 each bind 3-dehydroquinate; that span reads EIR. H127 serves as the catalytic Proton donor/acceptor. The active-site Schiff-base intermediate with substrate is K150. The 3-dehydroquinate site is built by R190, T209, and Q213.

It belongs to the type-I 3-dehydroquinase family. In terms of assembly, homodimer.

The enzyme catalyses 3-dehydroquinate = 3-dehydroshikimate + H2O. The protein operates within metabolic intermediate biosynthesis; chorismate biosynthesis; chorismate from D-erythrose 4-phosphate and phosphoenolpyruvate: step 3/7. Its function is as follows. Involved in the third step of the chorismate pathway, which leads to the biosynthesis of aromatic amino acids. Catalyzes the cis-dehydration of 3-dehydroquinate (DHQ) and introduces the first double bond of the aromatic ring to yield 3-dehydroshikimate. The polypeptide is 3-dehydroquinate dehydratase (Thermoplasma volcanium (strain ATCC 51530 / DSM 4299 / JCM 9571 / NBRC 15438 / GSS1)).